We begin with the raw amino-acid sequence, 230 residues long: Small ribosomal subunit protein uS3 (230 aa).

Positions Val39–Arg107 constitute a KH type-2 domain. Positions Ser210–Asn230 are disordered.

The protein belongs to the universal ribosomal protein uS3 family. As to quaternary structure, part of the 30S ribosomal subunit. Forms a tight complex with proteins S10 and S14.

Binds the lower part of the 30S subunit head. Binds mRNA in the 70S ribosome, positioning it for translation. This is Small ribosomal subunit protein uS3 from Neisseria gonorrhoeae (strain ATCC 700825 / FA 1090).